A 417-amino-acid chain; its full sequence is Tol-Pal system protein TolB (417 aa).

A signal peptide spans 1 to 16 (MRYLWLFLIGTIGLFA).

This sequence belongs to the TolB family. The Tol-Pal system is composed of five core proteins: the inner membrane proteins TolA, TolQ and TolR, the periplasmic protein TolB and the outer membrane protein Pal. They form a network linking the inner and outer membranes and the peptidoglycan layer.

It localises to the periplasm. Part of the Tol-Pal system, which plays a role in outer membrane invagination during cell division and is important for maintaining outer membrane integrity. The sequence is that of Tol-Pal system protein TolB from Helicobacter pylori (strain HPAG1).